The sequence spans 113 residues: uncharacterized protein (113 aa).

This is an uncharacterized protein from Methanocaldococcus jannaschii (strain ATCC 43067 / DSM 2661 / JAL-1 / JCM 10045 / NBRC 100440) (Methanococcus jannaschii).